Consider the following 370-residue polypeptide: Histidinol-phosphate aminotransferase 1 (370 aa).

At lysine 222 the chain carries N6-(pyridoxal phosphate)lysine.

It belongs to the class-II pyridoxal-phosphate-dependent aminotransferase family. Histidinol-phosphate aminotransferase subfamily. As to quaternary structure, homodimer. Pyridoxal 5'-phosphate serves as cofactor.

It catalyses the reaction L-histidinol phosphate + 2-oxoglutarate = 3-(imidazol-4-yl)-2-oxopropyl phosphate + L-glutamate. The protein operates within amino-acid biosynthesis; L-histidine biosynthesis; L-histidine from 5-phospho-alpha-D-ribose 1-diphosphate: step 7/9. This Bacillus cereus (strain ATCC 14579 / DSM 31 / CCUG 7414 / JCM 2152 / NBRC 15305 / NCIMB 9373 / NCTC 2599 / NRRL B-3711) protein is Histidinol-phosphate aminotransferase 1 (hisC1).